A 408-amino-acid chain; its full sequence is Peptidase T-like protein RB0614 (408 aa).

Residue histidine 80 participates in Zn(2+) binding. The active site involves aspartate 82. Aspartate 142 provides a ligand contact to Zn(2+). Glutamate 174 (proton acceptor) is an active-site residue. 3 residues coordinate Zn(2+): glutamate 175, aspartate 198, and histidine 380.

The protein belongs to the peptidase M20B family. It depends on Zn(2+) as a cofactor.

The protein is Peptidase T-like protein RB0614 of Rhizobium meliloti (strain 1021) (Ensifer meliloti).